Consider the following 76-residue polypeptide: Exodeoxyribonuclease 7 small subunit (76 aa).

This sequence belongs to the XseB family. As to quaternary structure, heterooligomer composed of large and small subunits.

It is found in the cytoplasm. The enzyme catalyses Exonucleolytic cleavage in either 5'- to 3'- or 3'- to 5'-direction to yield nucleoside 5'-phosphates.. Bidirectionally degrades single-stranded DNA into large acid-insoluble oligonucleotides, which are then degraded further into small acid-soluble oligonucleotides. This is Exodeoxyribonuclease 7 small subunit from Geotalea uraniireducens (strain Rf4) (Geobacter uraniireducens).